The primary structure comprises 289 residues: Protease HtpX (289 aa).

The next 2 helical transmembrane spans lie at 6-26 and 38-58; these read ILFLLTNLAITFVLGIVLNII and TGILMMSLLFGFTGSLISLFM. Residue H144 participates in Zn(2+) binding. E145 is a catalytic residue. A Zn(2+)-binding site is contributed by H148. 2 helical membrane-spanning segments follow: residues 152 to 172 and 194 to 214; these read GDMVTMTLLQGVLNTFVIFLS and LVFWVVDIALQMIFGILATMI. Zn(2+) is bound at residue E223.

The protein belongs to the peptidase M48B family. Requires Zn(2+) as cofactor.

It localises to the cell inner membrane. This is Protease HtpX from Haemophilus ducreyi (strain 35000HP / ATCC 700724).